A 123-amino-acid polypeptide reads, in one-letter code: ATP synthase epsilon chain (123 aa).

The protein belongs to the ATPase epsilon chain family. F-type ATPases have 2 components, CF(1) - the catalytic core - and CF(0) - the membrane proton channel. CF(1) has five subunits: alpha(3), beta(3), gamma(1), delta(1), epsilon(1). CF(0) has three main subunits: a, b and c.

It localises to the cell inner membrane. Functionally, produces ATP from ADP in the presence of a proton gradient across the membrane. The polypeptide is ATP synthase epsilon chain (Helicobacter pylori (strain Shi470)).